The chain runs to 288 residues: UDP-3-O-acyl-N-acetylglucosamine deacetylase (288 aa).

Residues H79, H236, and D240 each coordinate Zn(2+). H263 functions as the Proton donor in the catalytic mechanism.

Belongs to the LpxC family. Requires Zn(2+) as cofactor.

It carries out the reaction a UDP-3-O-[(3R)-3-hydroxyacyl]-N-acetyl-alpha-D-glucosamine + H2O = a UDP-3-O-[(3R)-3-hydroxyacyl]-alpha-D-glucosamine + acetate. The protein operates within glycolipid biosynthesis; lipid IV(A) biosynthesis; lipid IV(A) from (3R)-3-hydroxytetradecanoyl-[acyl-carrier-protein] and UDP-N-acetyl-alpha-D-glucosamine: step 2/6. Catalyzes the hydrolysis of UDP-3-O-myristoyl-N-acetylglucosamine to form UDP-3-O-myristoylglucosamine and acetate, the committed step in lipid A biosynthesis. The polypeptide is UDP-3-O-acyl-N-acetylglucosamine deacetylase (Rickettsia felis (strain ATCC VR-1525 / URRWXCal2) (Rickettsia azadi)).